A 406-amino-acid polypeptide reads, in one-letter code: Gustatory receptor for sugar taste 64b (406 aa).

At 1–47 (MPQGETFHRAVSNVLFISQIYGLLPVSNVRALDVADIRFRWCSPRIL) the chain is on the cytoplasmic side. The chain crosses the membrane as a helical span at residues 48 to 68 (YSLLIGILNLSEFGAVINYVI). The Extracellular segment spans residues 69 to 79 (KVTINFHTSST). The helical transmembrane segment at 80-100 (LSLYIVCLLEHLFFWRLAIQW) threads the bilayer. Over 101-130 (PRIMRTWHGVEQLFLRVPYRFYGEYRIKRR) the chain is Cytoplasmic. A helical transmembrane segment spans residues 131 to 151 (IYIVFTIVMSSALVEHCLLLG). Over 152-183 (NSFHLSNMERTQCKINVTYFESIYKWERPHLY) the chain is Extracellular. An N-linked (GlcNAc...) asparagine glycan is attached at N167. Residues 184-204 (MILPYHFWMLPILEWVNQTIA) traverse the membrane as a helical segment. Residues 205–265 (YPRSFTDCFI…KRLVHLLDAA (61 aa)) lie on the Cytoplasmic side of the membrane. The helical transmembrane segment at 266–286 (IAPLVLLAFGNNMSFICFQLF) threads the bilayer. Topologically, residues 287–290 (NSFK) are extracellular. Residues 291-311 (NIGVDFLVMLAFWYSLGFAVV) form a helical membrane-spanning segment. The Cytoplasmic portion of the chain corresponds to 312–370 (RTLLTIFVASSINDYERKIVTALRDVPSRAWSIEVQRFSEQLGNDTTALSGSGFFYLTR). The chain crosses the membrane as a helical span at residues 371-391 (SLVLAMGTTIITYELMISDVI). The Extracellular portion of the chain corresponds to 392-406 (NQGSIRQKTQYCREY).

It belongs to the insect chemoreceptor superfamily. Gustatory receptor (GR) family. Gr5a subfamily. In terms of tissue distribution, expressed in Gr5a-expressing sugar-sensing cells.

The protein localises to the cell membrane. Its function is as follows. One of the few identified sugar gustatory receptors identified so far and which promotes the starvation-induced increase of feeding motivation. This Drosophila melanogaster (Fruit fly) protein is Gustatory receptor for sugar taste 64b (Gr64b).